A 299-amino-acid chain; its full sequence is MLRGIQALSRPLTRVYRALAVIGVLAASLLASWVGAVPQVGLAASALPTFAHVVIVVEENRSQAAIIGNKSAPFINSLAANGAMMAQAFAETHPSEPNYLALFAGNTFGLTKNTCPVNGGALPNLGSELLSAGYTFMGFAEDLPAVGSTVCSAGKYARKHVPWVNFSNVPTTLSVPFSAFPKPQNYPGLPTVSFVIPNADNDMHDGSIAQGDAWLNRHLSAYANWAKTNNSLLVVTWDEDDGSSRNQIPTVFYGAHVRPGTYNETISHYNVLSTLEQIYGLPKTGYATNAPPITDIWGD.

The N-terminal stretch at M1–A43 is a signal peptide.

As to quaternary structure, monomer. SapM interacts with host RAB7 via its C-terminus. The cofactor is a metal cation.

The protein localises to the secreted. Its subcellular location is the host cytoplasmic vesicle. The protein resides in the host phagosome. It catalyses the reaction a phosphate monoester + H2O = an alcohol + phosphate. The enzyme catalyses a 1,2-diacyl-sn-glycero-3-phospho-(1D-myo-inositol-3-phosphate) + H2O = a 1,2-diacyl-sn-glycero-3-phospho-(1D-myo-inositol) + phosphate. Phosphatase activity is inhibited in vitro by low concentrations of several heavy metals (zinc chloride, sodium molybdate, magnesium chloride, and copper sulfate) and moderately high concentrations (&gt;8 mM) of EDTA. Functionally, virulence factor that plays an important role in blocking phagosome-lysosome fusion and thus participates in the intracellular survival of the pathogen. Acts as a phosphatase that dephosphorylates phosphatidylinositol 3-phosphate (PI3P), a membrane trafficking regulatory lipid essential for phagosomal acquisition of lysosomal constituents. Therefore, SapM eliminates PI3P from the phagosomal membrane by catalyzing its hydrolysis, and thus contributes to inhibition of phagosome maturation. Also interferes with autophagy: SapM blocks autophagosome-lysosome fusion in macrophages by binding to the small GTPase RAB7, which prevents RAB7 from being involved in this process and thus negatively regulates autophagy flux. In vitro, displays phosphatase activity with broad specificity; can dephosphorylate a variety of phosphoester substrates, with the highest activity against phosphoenolpyruvate, glycerophosphate, GTP, NADPH, phosphotyrosine and trehalose-6-phosphate. In contrast, the enzyme exhibits poor activity against glucose-6-phosphate, phosphothreonine, and a number of nucleotides (NADP, ATP, AMP, and GMP). The polypeptide is Phosphatidylinositol-3-phosphatase (Mycobacterium tuberculosis (strain ATCC 25618 / H37Rv)).